The chain runs to 670 residues: MKGTKGKVFRVFTAFLAFVLFITAYDLTKGSEKPEDIHNTSLLRNSCFFNWLESKKTRGITMAEEKKANQLPDRSEVKAEDTWRLEDIFPSDEAWNKEFQAVKELIPNLSKYKGKLADSADHLYEALTYQDKVMERLGRLYTYAHMRSDQDTGNSFYQGLNDKAGNLYTQAASATAYLVPEILSIEEDKLQQFILEKEELKLYSHAIEEITKERPHVLSEKEEALLAEASEVLGSSSNTFSVLNNADITFPSIKDEDGNEKQITHGNFINFLESENREVRKNAFDAVYKTYGQYKNTMATTLSGTVKKDNFYARVKKYKSAREAALSNNSIPEEVYDNLVKTINKHLPLLHRYIALRKKVLELDEVHIYDLYTPLVKDAGMKVTYEEAKDYMLKGLAPLGEEYASILKEGLENRWVDVYENKGKRNGAYSSGAYGTNPYILMNWHNNVNNLFTLVHEFGHSVHSYYTRKHQPYPYGNYSIFVAEVASTTNEALLGEYLLNNLEDEKQRLYILNHMLEGFRGTVFRQTMFAEFEHLIHTKAQEGEPLTPELLTNVYYDLNKKYFGDGMVIDKEIGLEWSRIPHFYYNYYVYQYATGYSAAQALSSQILKEGKPAVDRYIDFLKAGSSQYPIDVLKKAGVDMTSPEPIEAACKMFEEKLDEMEELLMKVKQS.

Position 456 (H456) interacts with Zn(2+). E457 is a catalytic residue. Zn(2+)-binding residues include H460 and H463.

The protein belongs to the peptidase M3B family. It depends on Zn(2+) as a cofactor.

The protein resides in the cytoplasm. Its function is as follows. Overexpression results in inhibition of sporulation initiation. This sporulation deficiency could be the result of hydrolysis by PepF of the PhrA peptide, a phosphatase regulator. Thus, overexpression of PepF appears to act at the level of the phosphorelay, most likely through modulation of the negative role played by phosphatases. Overexpression of PepF also affects the activity of the competence and sporulation stimulating factor PhrC. In Bacillus subtilis (strain 168), this protein is Oligopeptidase PepF.